A 237-amino-acid polypeptide reads, in one-letter code: Large ribosomal subunit protein uL1 (237 aa).

It belongs to the universal ribosomal protein uL1 family. In terms of assembly, part of the 50S ribosomal subunit.

Binds directly to 23S rRNA. The L1 stalk is quite mobile in the ribosome, and is involved in E site tRNA release. Its function is as follows. Protein L1 is also a translational repressor protein, it controls the translation of the L11 operon by binding to its mRNA. The protein is Large ribosomal subunit protein uL1 of Myxococcus xanthus (strain DK1622).